We begin with the raw amino-acid sequence, 125 residues long: MRHRKSGSKLNRTSAHRKAMFKNMVVSLVMHKIIKTTLSKAKALRRIIEPLITRSKVDTIANRRLIFSKTRNNDVVTKLFTQISPYFYNRPGGYTRILKCGLRKGDNAPMAYIELVERSKIKQKI.

It belongs to the bacterial ribosomal protein bL17 family. In terms of assembly, part of the 50S ribosomal subunit. Contacts protein L32.

In Blochmanniella pennsylvanica (strain BPEN), this protein is Large ribosomal subunit protein bL17.